We begin with the raw amino-acid sequence, 222 residues long: DNA mismatch repair protein MutH (222 aa).

Belongs to the MutH family.

It localises to the cytoplasm. Its function is as follows. Sequence-specific endonuclease that cleaves unmethylated GATC sequences. It is involved in DNA mismatch repair. The protein is DNA mismatch repair protein MutH of Pasteurella multocida (strain Pm70).